Here is a 272-residue protein sequence, read N- to C-terminus: 3-keto-5-aminohexanoate cleavage enzyme (272 aa).

(5S)-5-amino-3-oxohexanoate is bound at residue Glu-15. Residues His-47 and His-49 each coordinate Zn(2+). The (5S)-5-amino-3-oxohexanoate site is built by Ser-83, Gly-86, and Thr-107. Residue Glu-226 participates in Zn(2+) binding.

It belongs to the BKACE family. Kce subfamily. In terms of assembly, homotetramer. The cofactor is Zn(2+).

It catalyses the reaction (5S)-5-amino-3-oxohexanoate + acetyl-CoA = (3S)-3-aminobutanoyl-CoA + acetoacetate. It functions in the pathway amino-acid degradation; L-lysine degradation via acetate pathway. Its activity is regulated as follows. 3-fold increase in activity by addition of 10 mM 2-mercaptoethanol. Addition of CoCl(2) and to a lesser extent MnCl(2) increases the activity but not MgCl(2). Inhibited by phosphate buffer but not by 5,5'-dithio-2-nitrobenzoic acid. Functionally, involved in the anaerobic fermentation of lysine. Catalyzes the reversible reaction between 3-keto-5-aminohexanoate (KAH) and acetyl-CoA to form 3-aminobutyryl-CoA and acetoacetate. The reaction involves the deprotonation of KAH, the nucleophilic addition onto acetyl-CoA and the intramolecular transfer of the CoA moiety. It can also use beta-alanyl-CoA as substrate. This Fusobacterium nucleatum subsp. nucleatum (strain ATCC 25586 / DSM 15643 / BCRC 10681 / CIP 101130 / JCM 8532 / KCTC 2640 / LMG 13131 / VPI 4355) protein is 3-keto-5-aminohexanoate cleavage enzyme.